The chain runs to 174 residues: MNYFELFKFSPAFDIDTAVLAERYRELQRAVHPDKFAHDTEQQKLLSVQRTAQVNDGYQTLKDPIRRAEHLLSLRGIDLSHETTTVKDTVFLMQQMEWREALEDIRHSTDPQESIDELYQSFAEYRAKLTYMLTAQLNSSKDEDALLAADQVRKLKFMAKLHDELTRIEDALLD.

Residues 2-74 enclose the J domain; it reads NYFELFKFSP…IRRAEHLLSL (73 aa).

It belongs to the HscB family. As to quaternary structure, interacts with HscA and stimulates its ATPase activity.

Co-chaperone involved in the maturation of iron-sulfur cluster-containing proteins. Seems to help targeting proteins to be folded toward HscA. The polypeptide is Co-chaperone protein HscB homolog (Shewanella sp. (strain W3-18-1)).